Consider the following 1157-residue polypeptide: Endo-1,4-beta-xylanase A (1157 aa).

The N-terminal stretch at Met-1–Ala-33 is a signal peptide. CBM-cenC domains follow at residues Ile-38–Gln-189 and Gly-195–Glu-343. The GH10 domain occupies Gln-352–Pro-675. Glu-495 serves as the catalytic Proton donor. The active site involves Asp-537. Glu-600 serves as the catalytic Nucleophile. SLH domains are found at residues Lys-1051–Glu-1114 and Phe-1115–Gln-1157.

Belongs to the glycosyl hydrolase 10 (cellulase F) family.

It carries out the reaction Endohydrolysis of (1-&gt;4)-beta-D-xylosidic linkages in xylans.. The protein operates within glycan degradation; xylan degradation. Its function is as follows. Endo-acting enzyme that randomly cleaves the internal xylosidic linkages of the xylan backbone, yielding xylooligosaccharides of various lengths which are further hydrolyzed to xylose molecules by beta-xylosidase (EC 3.2.1.37). Requires at least three xylose residues for catalytic activity. Does not have activity against xylobiose. The chain is Endo-1,4-beta-xylanase A (xynA) from Thermoanaerobacterium saccharolyticum.